The following is a 461-amino-acid chain: B3 domain-containing protein REM9 (461 aa).

Positions N11–S103 form a DNA-binding region, TF-B3 1. Residues P110–L146 are disordered. A compositionally biased stretch (basic and acidic residues) spans I126 to S143. 2 consecutive DNA-binding regions (TF-B3) follow at residues C148 to T244 and L230 to S332. Residues F333–T415 are disordered. Over residues P384 to E394 the composition is skewed to basic and acidic residues. A compositionally biased stretch (polar residues) spans R400–T415.

The protein localises to the nucleus. In Arabidopsis thaliana (Mouse-ear cress), this protein is B3 domain-containing protein REM9 (REM9).